Here is a 386-residue protein sequence, read N- to C-terminus: Trichocyst matrix protein T2-A (386 aa).

The signal sequence occupies residues 1-19 (MKTVILALALIVLASSTQA). Residues 20–48 (DVIATIKKIDQSPFGRTLFDTIYLELQTG) constitute a propeptide that is removed on maturation. Residues 51 to 154 (LDRLLSTLTD…AEEHEDFEEK (104 aa)) adopt a coiled-coil conformation. Residues 184–238 (KGKATKQTHKFTKEVASMIQKHFTTSAKKTAKFQHRKGYSKLFKAFATIASKVEQ) constitute a propeptide that is removed on maturation. Positions 293 to 332 (SALANATSDLASLNDIIAQVEASLDTTEQRIENVSADRHD) form a coiled coil.

Belongs to the TMP family.

The protein resides in the trichocyst. Its function is as follows. Structural protein that crystallize inside the trichocyst matrix. The protein is Trichocyst matrix protein T2-A (T2A) of Paramecium tetraurelia.